A 256-amino-acid polypeptide reads, in one-letter code: Acetyl-coenzyme A carboxylase carboxyl transferase subunit alpha (256 aa).

One can recognise a CoA carboxyltransferase C-terminal domain in the interval 1–236; the sequence is MTDVARILKE…KEHLKTEINQ (236 aa).

This sequence belongs to the AccA family. In terms of assembly, acetyl-CoA carboxylase is a heterohexamer composed of biotin carboxyl carrier protein (AccB), biotin carboxylase (AccC) and two subunits each of ACCase subunit alpha (AccA) and ACCase subunit beta (AccD).

It is found in the cytoplasm. The enzyme catalyses N(6)-carboxybiotinyl-L-lysyl-[protein] + acetyl-CoA = N(6)-biotinyl-L-lysyl-[protein] + malonyl-CoA. Its pathway is lipid metabolism; malonyl-CoA biosynthesis; malonyl-CoA from acetyl-CoA: step 1/1. In terms of biological role, component of the acetyl coenzyme A carboxylase (ACC) complex. First, biotin carboxylase catalyzes the carboxylation of biotin on its carrier protein (BCCP) and then the CO(2) group is transferred by the carboxyltransferase to acetyl-CoA to form malonyl-CoA. In Streptococcus uberis (strain ATCC BAA-854 / 0140J), this protein is Acetyl-coenzyme A carboxylase carboxyl transferase subunit alpha.